A 313-amino-acid polypeptide reads, in one-letter code: NAD-capped RNA hydrolase NudC (313 aa).

Arginine 111 is a substrate binding site. Residues proline 168 to leucine 293 form the Nudix hydrolase domain. Residues alanine 202, glutamate 218, and glutamate 222 each coordinate a divalent metal cation. The Nudix box signature appears at glycine 203 to glycine 224. Glutamine 236–serine 243 serves as a coordination point for substrate. Glutamate 264 contacts a divalent metal cation.

It belongs to the Nudix hydrolase family. NudC subfamily. As to quaternary structure, homodimer. Mg(2+) serves as cofactor. The cofactor is Mn(2+).

It carries out the reaction a 5'-end NAD(+)-phospho-ribonucleoside in mRNA + H2O = a 5'-end phospho-adenosine-phospho-ribonucleoside in mRNA + beta-nicotinamide D-ribonucleotide + 2 H(+). The catalysed reaction is NAD(+) + H2O = beta-nicotinamide D-ribonucleotide + AMP + 2 H(+). It catalyses the reaction NADH + H2O = reduced beta-nicotinamide D-ribonucleotide + AMP + 2 H(+). Functionally, mRNA decapping enzyme that specifically removes the nicotinamide adenine dinucleotide (NAD) cap from a subset of mRNAs by hydrolyzing the diphosphate linkage to produce nicotinamide mononucleotide (NMN) and 5' monophosphate mRNA. The NAD-cap is present at the 5'-end of some mRNAs and stabilizes RNA against 5'-processing. Has preference for mRNAs with a 5'-end purine. Catalyzes the hydrolysis of a broad range of dinucleotide pyrophosphates. This chain is NAD-capped RNA hydrolase NudC, found in Mycobacterium tuberculosis (strain ATCC 25177 / H37Ra).